A 212-amino-acid chain; its full sequence is uncharacterized protein (212 aa).

Residues Gly53, Glu74, and Asp97 each contribute to the S-adenosyl-L-methionine site.

It belongs to the methyltransferase superfamily. YrrT family.

Functionally, could be a S-adenosyl-L-methionine-dependent methyltransferase. This is an uncharacterized protein from Bacillus cereus (strain ZK / E33L).